We begin with the raw amino-acid sequence, 451 residues long: Secreted RxLR effector protein 111 (451 aa).

The first 19 residues, 1-19, serve as a signal peptide directing secretion; it reads MRGTLATALLLVASCRIAA. The short motif at 48–69 is the RxLR-dEER element; the sequence is RFLRDNREQRVALALTAANESR. Asn-66 carries N-linked (GlcNAc...) asparagine glycosylation. 2 stretches are compositionally biased toward polar residues: residues 175-184 and 413-426; these read RKTLSKTQFK and SPAS…QRTG. 2 disordered regions span residues 175 to 194 and 404 to 451; these read RKTL…STKR and IPLQ…NKHA. The span at 437–451 shows a compositional bias: basic and acidic residues; sequence PERDSFRHIESNKHA.

This sequence belongs to the RxLR effector family.

The protein resides in the secreted. It is found in the host nucleus. In terms of biological role, secreted effector that acts as an elicitor that induces cell death in host plant cells. This chain is Secreted RxLR effector protein 111, found in Plasmopara viticola (Downy mildew of grapevine).